A 206-amino-acid polypeptide reads, in one-letter code: Thiamine-phosphate synthase (206 aa).

4-amino-2-methyl-5-(diphosphooxymethyl)pyrimidine is bound by residues 33 to 37 (QMRFK) and Asn-65. Mg(2+) contacts are provided by Asp-66 and Asp-85. Thr-104 lines the 4-amino-2-methyl-5-(diphosphooxymethyl)pyrimidine pocket. 130 to 132 (TAT) serves as a coordination point for 2-[(2R,5Z)-2-carboxy-4-methylthiazol-5(2H)-ylidene]ethyl phosphate. Lys-133 contributes to the 4-amino-2-methyl-5-(diphosphooxymethyl)pyrimidine binding site. A 2-[(2R,5Z)-2-carboxy-4-methylthiazol-5(2H)-ylidene]ethyl phosphate-binding site is contributed by Gly-166.

The protein belongs to the thiamine-phosphate synthase family. Mg(2+) is required as a cofactor.

The catalysed reaction is 2-[(2R,5Z)-2-carboxy-4-methylthiazol-5(2H)-ylidene]ethyl phosphate + 4-amino-2-methyl-5-(diphosphooxymethyl)pyrimidine + 2 H(+) = thiamine phosphate + CO2 + diphosphate. It catalyses the reaction 2-(2-carboxy-4-methylthiazol-5-yl)ethyl phosphate + 4-amino-2-methyl-5-(diphosphooxymethyl)pyrimidine + 2 H(+) = thiamine phosphate + CO2 + diphosphate. The enzyme catalyses 4-methyl-5-(2-phosphooxyethyl)-thiazole + 4-amino-2-methyl-5-(diphosphooxymethyl)pyrimidine + H(+) = thiamine phosphate + diphosphate. Its pathway is cofactor biosynthesis; thiamine diphosphate biosynthesis; thiamine phosphate from 4-amino-2-methyl-5-diphosphomethylpyrimidine and 4-methyl-5-(2-phosphoethyl)-thiazole: step 1/1. Condenses 4-methyl-5-(beta-hydroxyethyl)thiazole monophosphate (THZ-P) and 2-methyl-4-amino-5-hydroxymethyl pyrimidine pyrophosphate (HMP-PP) to form thiamine monophosphate (TMP). This Flavobacterium psychrophilum (strain ATCC 49511 / DSM 21280 / CIP 103535 / JIP02/86) protein is Thiamine-phosphate synthase.